The following is a 207-amino-acid chain: Putative transcriptional regulator (207 aa).

The Response regulatory domain maps to 3-118; the sequence is KVLIVDDHPA…ELLLAAKAVL (116 aa). 2 positions are modified to 4-aspartylphosphate: Asp-9 and Asp-53. Residues 140–205 enclose the HTH luxR-type domain; it reads EARMLESLSD…GLIDFARRHE (66 aa). Residues 155 to 174 constitute a DNA-binding region (H-T-H motif); it reads LQYLANGNTNKAIAQQLFLS.

In terms of biological role, probable transcriptional regulator. The chain is Putative transcriptional regulator from Pseudomonas aeruginosa (strain ATCC 15692 / DSM 22644 / CIP 104116 / JCM 14847 / LMG 12228 / 1C / PRS 101 / PAO1).